Reading from the N-terminus, the 240-residue chain is UDP-2,3-diacylglucosamine hydrolase (240 aa).

5 residues coordinate Mn(2+): aspartate 8, histidine 10, aspartate 41, asparagine 79, and histidine 114. A substrate-binding site is contributed by 79-80 (NR). Aspartate 122, serine 160, threonine 164, lysine 167, and histidine 195 together coordinate substrate. Residues histidine 195 and histidine 197 each coordinate Mn(2+).

This sequence belongs to the LpxH family. Requires Mn(2+) as cofactor.

It is found in the cell inner membrane. It catalyses the reaction UDP-2-N,3-O-bis[(3R)-3-hydroxytetradecanoyl]-alpha-D-glucosamine + H2O = 2-N,3-O-bis[(3R)-3-hydroxytetradecanoyl]-alpha-D-glucosaminyl 1-phosphate + UMP + 2 H(+). It participates in glycolipid biosynthesis; lipid IV(A) biosynthesis; lipid IV(A) from (3R)-3-hydroxytetradecanoyl-[acyl-carrier-protein] and UDP-N-acetyl-alpha-D-glucosamine: step 4/6. Hydrolyzes the pyrophosphate bond of UDP-2,3-diacylglucosamine to yield 2,3-diacylglucosamine 1-phosphate (lipid X) and UMP by catalyzing the attack of water at the alpha-P atom. Involved in the biosynthesis of lipid A, a phosphorylated glycolipid that anchors the lipopolysaccharide to the outer membrane of the cell. The sequence is that of UDP-2,3-diacylglucosamine hydrolase from Pseudomonas paraeruginosa (strain DSM 24068 / PA7) (Pseudomonas aeruginosa (strain PA7)).